The chain runs to 435 residues: GTPase Obg (435 aa).

The 159-residue stretch at 6–164 (ADFVDRVKIF…RWLELELKIL (159 aa)) folds into the Obg domain. An OBG-type G domain is found at 165–335 (ADVGLVGYPN…LVSKLASIVR (171 aa)). GTP is bound by residues 171 to 178 (GYPNVGKS), 196 to 200 (FTTLI), 217 to 220 (DIPG), 287 to 290 (NKID), and 316 to 318 (SAV). 2 residues coordinate Mg(2+): Ser-178 and Thr-198. Residues 357–435 (RRLPEKFHLE…IGDFEFEYRE (79 aa)) enclose the OCT domain.

Belongs to the TRAFAC class OBG-HflX-like GTPase superfamily. OBG GTPase family. Monomer. Mg(2+) serves as cofactor.

Its subcellular location is the cytoplasm. Its function is as follows. An essential GTPase which binds GTP, GDP and possibly (p)ppGpp with moderate affinity, with high nucleotide exchange rates and a fairly low GTP hydrolysis rate. Plays a role in control of the cell cycle, stress response, ribosome biogenesis and in those bacteria that undergo differentiation, in morphogenesis control. The chain is GTPase Obg from Thermotoga maritima (strain ATCC 43589 / DSM 3109 / JCM 10099 / NBRC 100826 / MSB8).